The following is a 184-amino-acid chain: MNNLENIVEQLKRNRVVAYPTEAVFGLGCNPNNESAVRALLKLKKRPEEKGLILIAPTKELLLPYIDENKLTAAHWQIFETPSERAITWVMPAKKAVPQYLTGQFDTIAVRLCCIPAVIDLCERTGFALTSTSCNLTGQEPCRTADEVKLQFGADFPVLEAETAGKTNPSEIRDIFTQHIFRQG.

Positions 1–184 (MNNLENIVEQ…IFTQHIFRQG (184 aa)) constitute a YrdC-like domain.

The protein belongs to the SUA5 family. TsaC subfamily.

It is found in the cytoplasm. The catalysed reaction is L-threonine + hydrogencarbonate + ATP = L-threonylcarbamoyladenylate + diphosphate + H2O. Required for the formation of a threonylcarbamoyl group on adenosine at position 37 (t(6)A37) in tRNAs that read codons beginning with adenine. Catalyzes the conversion of L-threonine, HCO(3)(-)/CO(2) and ATP to give threonylcarbamoyl-AMP (TC-AMP) as the acyladenylate intermediate, with the release of diphosphate. The polypeptide is Threonylcarbamoyl-AMP synthase (Actinobacillus pleuropneumoniae serotype 7 (strain AP76)).